Here is a 294-residue protein sequence, read N- to C-terminus: 4-hydroxy-tetrahydrodipicolinate synthase (294 aa).

Threonine 49 contributes to the pyruvate binding site. Tyrosine 136 functions as the Proton donor/acceptor in the catalytic mechanism. The active-site Schiff-base intermediate with substrate is the lysine 164. Isoleucine 207 lines the pyruvate pocket.

It belongs to the DapA family. Homotetramer; dimer of dimers.

The protein localises to the cytoplasm. The catalysed reaction is L-aspartate 4-semialdehyde + pyruvate = (2S,4S)-4-hydroxy-2,3,4,5-tetrahydrodipicolinate + H2O + H(+). Its pathway is amino-acid biosynthesis; L-lysine biosynthesis via DAP pathway; (S)-tetrahydrodipicolinate from L-aspartate: step 3/4. In terms of biological role, catalyzes the condensation of (S)-aspartate-beta-semialdehyde [(S)-ASA] and pyruvate to 4-hydroxy-tetrahydrodipicolinate (HTPA). This Natronomonas pharaonis (strain ATCC 35678 / DSM 2160 / CIP 103997 / JCM 8858 / NBRC 14720 / NCIMB 2260 / Gabara) (Halobacterium pharaonis) protein is 4-hydroxy-tetrahydrodipicolinate synthase.